A 437-amino-acid chain; its full sequence is Protein arginine methyltransferase NDUFAF7 homolog, mitochondrial (437 aa).

Residues 21–49 (RPNLGATGTPKMEPPKEQPEASSKAESGH) form a disordered region.

The protein belongs to the NDUFAF7 family.

It localises to the mitochondrion. The catalysed reaction is L-arginyl-[protein] + 2 S-adenosyl-L-methionine = N(omega),N(omega)'-dimethyl-L-arginyl-[protein] + 2 S-adenosyl-L-homocysteine + 2 H(+). In terms of biological role, arginine methyltransferase involved in the assembly or stability of mitochondrial NADH:ubiquinone oxidoreductase complex (complex I). This chain is Protein arginine methyltransferase NDUFAF7 homolog, mitochondrial, found in Drosophila melanogaster (Fruit fly).